The primary structure comprises 414 residues: tRNA N6-adenosine threonylcarbamoyltransferase, mitochondrial (414 aa).

A mitochondrion-targeting transit peptide spans Met-1–His-29. Residues Lys-74 and Lys-140 each carry the N6-acetyllysine modification. Positions 147 and 151 each coordinate a divalent metal cation. Substrate is bound by residues Leu-169–Gly-173 and Asp-202. Lys-203 bears the N6-acetyllysine mark. Substrate-binding residues include Gly-222 and Glu-226. N6-acetyllysine is present on residues Lys-230 and Lys-299. Substrate contacts are provided by residues Ser-329–Asn-330 and Thr-357. Asp-358 contacts a divalent metal cation.

It belongs to the KAE1 / TsaD family. In terms of assembly, monomer. Requires a divalent metal cation as cofactor.

The protein localises to the mitochondrion. The enzyme catalyses L-threonylcarbamoyladenylate + adenosine(37) in tRNA = N(6)-L-threonylcarbamoyladenosine(37) in tRNA + AMP + H(+). Functionally, required for the formation of a threonylcarbamoyl group on adenosine at position 37 (t(6)A37) in mitochondrial tRNAs that read codons beginning with adenine. Probably involved in the transfer of the threonylcarbamoyl moiety of threonylcarbamoyl-AMP (TC-AMP) to the N6 group of A37. Involved in mitochondrial genome maintenance. In Mus musculus (Mouse), this protein is tRNA N6-adenosine threonylcarbamoyltransferase, mitochondrial.